Here is a 660-residue protein sequence, read N- to C-terminus: ATP-dependent RNA helicase DDX18 (660 aa).

Positions 16–153 (RNAKLRQRNL…DVKKADDSEV (138 aa)) are disordered. Polar residues predominate over residues 25-40 (LKLQETSDTSLSQPQN). Basic and acidic residues predominate over residues 124-133 (PDTKKAKTEE). The span at 134–143 (SAEACEEPED) shows a compositional bias: acidic residues. A Q motif motif is present at residues 169–197 (FASLSNLVNENTLKAIEEMGFKRMTEIQH). The region spanning 200-375 (IRPLLEGRDL…RISLKKEPLY (176 aa)) is the Helicase ATP-binding domain. 213-220 (AKTGSGKT) is a binding site for ATP. A DEAD box motif is present at residues 323–326 (DEAD). Residues 389 to 559 (GLEQGYVVCP…DIQSQLEKLI (171 aa)) form the Helicase C-terminal domain.

It belongs to the DEAD box helicase family. DDX18/HAS1 subfamily. As to quaternary structure, interacts with NOL8; the interaction is RNA-dependent. Interacts with PRC2 complex components EZH2, SUZ2 and JARID2; these interactions prevent deposition of the repressive H3K27me3 mark onto rDNA in pluripotent cells.

It is found in the nucleus. Its subcellular location is the nucleolus. The protein resides in the chromosome. The catalysed reaction is ATP + H2O = ADP + phosphate + H(+). Its function is as follows. ATP-dependent RNA helicase that plays a role in the regulation of R-loop homeostasis in both endogenous R-loop-prone regions and at sites of DNA damage. At endogenous loci such as actively transcribed genes, may act as a helicase to resolve the formation of R-loop during transcription and prevent the interference of R-loop with DNA-replication machinery. Also participates in the removal of DNA-lesion-associated R-loop. Plays an essential role for establishing pluripotency during embryogenesis and for pluripotency maintenance in embryonic stem cells. Mechanistically, prevents the polycomb repressive complex 2 (PRC2) from accessing rDNA loci and protects the active chromatin status in nucleolus. This chain is ATP-dependent RNA helicase DDX18 (Ddx18), found in Mus musculus (Mouse).